Reading from the N-terminus, the 84-residue chain is Putative defensin-like protein 139 (84 aa).

The first 28 residues, 1–28 (MEPSNQIFFYLRRSKLLSGLGEIRMAKG), serve as a signal peptide directing secretion. Intrachain disulfides connect Cys37–Cys81, Cys46–Cys65, Cys51–Cys75, and Cys55–Cys77.

Belongs to the DEFL family.

It localises to the secreted. In Arabidopsis thaliana (Mouse-ear cress), this protein is Putative defensin-like protein 139 (LCR7).